The sequence spans 200 residues: dTTP/UTP pyrophosphatase (200 aa).

Residue Asp-73 is the Proton acceptor of the active site.

Belongs to the Maf family. YhdE subfamily. A divalent metal cation is required as a cofactor.

The protein resides in the cytoplasm. The enzyme catalyses dTTP + H2O = dTMP + diphosphate + H(+). It catalyses the reaction UTP + H2O = UMP + diphosphate + H(+). Functionally, nucleoside triphosphate pyrophosphatase that hydrolyzes dTTP and UTP. May have a dual role in cell division arrest and in preventing the incorporation of modified nucleotides into cellular nucleic acids. This chain is dTTP/UTP pyrophosphatase, found in Chromohalobacter salexigens (strain ATCC BAA-138 / DSM 3043 / CIP 106854 / NCIMB 13768 / 1H11).